The following is a 187-amino-acid chain: Protein lethal(2)essential for life (187 aa).

Residues 61-170 (NSLQKQESGS…TERLVQITQT (110 aa)) enclose the sHSP domain. The interval 151-187 (APMKALPPPQTERLVQITQTGPSSKEDNAKKVETSTA) is disordered. Residues 174–187 (SKEDNAKKVETSTA) are compositionally biased toward basic and acidic residues.

This sequence belongs to the small heat shock protein (HSP20) family. In terms of tissue distribution, ubiquitously expressed during embryogenesis with no sign of tissue specificity in expression up to stage 16.

Its function is as follows. Vital role in embryonic development. The chain is Protein lethal(2)essential for life (l(2)efl) from Drosophila melanogaster (Fruit fly).